A 399-amino-acid chain; its full sequence is Elongation factor Tu (399 aa).

The tr-type G domain maps to 10–209 (KPHVNIGTIG…AVDSYIPTPK (200 aa)). The tract at residues 19 to 26 (GHVDHGKT) is G1. 19 to 26 (GHVDHGKT) lines the GTP pocket. Residue Thr-26 participates in Mg(2+) binding. Positions 60-64 (GITIA) are G2. The tract at residues 81–84 (DCPG) is G3. GTP contacts are provided by residues 81–85 (DCPGH) and 136–139 (NKTD). Residues 136–139 (NKTD) are G4. The interval 174–176 (SAL) is G5.

The protein belongs to the TRAFAC class translation factor GTPase superfamily. Classic translation factor GTPase family. EF-Tu/EF-1A subfamily. In terms of assembly, monomer.

The protein resides in the cytoplasm. The catalysed reaction is GTP + H2O = GDP + phosphate + H(+). In terms of biological role, GTP hydrolase that promotes the GTP-dependent binding of aminoacyl-tRNA to the A-site of ribosomes during protein biosynthesis. The chain is Elongation factor Tu from Campylobacter hominis (strain ATCC BAA-381 / DSM 21671 / CCUG 45161 / LMG 19568 / NCTC 13146 / CH001A).